A 745-amino-acid polypeptide reads, in one-letter code: MMTQAQTYFYDGSDVALLNGQYTDVFSLLGMHCINEGKALVVRCFLRNAQKVDVISLKDGRKVASLERVNEAGLFAGTLGRRVKPFLYALRVVYPLCELDIIDPYQFGSLLDSQDLYLFGEGGSEQAYRFLGANWRQVDSVEGVHFCVWAPNAKRVSVVGDFNHWDDTRHVMRQHMANGLWEIFLPDVAEGAHYKFDLVYQNGERHAKSDPMATQMECAPNNASIVPKKHQHPWADTQWMDKRATTAWHRAAMSIYEVQLGSWRRKGEFGEQYFDYQDLIEQLIPYVKEQGFTHIELMPVSEYPFDGSWGYQPVGLYAPTHRFGDANGLKAFIDACHQAEIGVLLDWVAAHFPKDPHGLVRFDGTCLYEHEDPRKGTHPDWDTLIYNYDRGEVRSFLLSNACYWLREFHLDGLRLDAVSSMLYLDYSREPGQWLPNAYGGRENLEAIHFLQMLNQRLYQAFPGICMIAEESTAFAGVTKPTDCGGLGFGFKWNMGWMNDSLSYLGRDPIYRQYHHNQLTFSLMYAYSEQFMLSISHDEVVHGKGSLLHKIPGDDWQKFATLRAYYGFMWGHPGKKLLFMGSEFAQRDEWNHNHSLDWHLLAFEPHQGVQRWLRDLNQLYRQFPALSVLDYESQGFRWLDCDNGRDSIFSFVRYGEGSDVPLVFVVNMTPTLHQGFRIGLPQGGDFCEYLNSDSHLYGGSNQGNAGKVIAEDLPWQGMASSALITVPPLGCLILGPATDAPRDTSL.

Aspartate 416 acts as the Nucleophile in catalysis. Residue glutamate 469 is the Proton donor of the active site.

Belongs to the glycosyl hydrolase 13 family. GlgB subfamily. In terms of assembly, monomer.

The catalysed reaction is Transfers a segment of a (1-&gt;4)-alpha-D-glucan chain to a primary hydroxy group in a similar glucan chain.. It functions in the pathway glycan biosynthesis; glycogen biosynthesis. In terms of biological role, catalyzes the formation of the alpha-1,6-glucosidic linkages in glycogen by scission of a 1,4-alpha-linked oligosaccharide from growing alpha-1,4-glucan chains and the subsequent attachment of the oligosaccharide to the alpha-1,6 position. The chain is 1,4-alpha-glucan branching enzyme GlgB from Shewanella sp. (strain MR-7).